Here is an 802-residue protein sequence, read N- to C-terminus: DNA mismatch repair protein MutS (802 aa).

Position 617–624 (617–624 (GPNMGGKS)) interacts with ATP.

It belongs to the DNA mismatch repair MutS family.

Functionally, this protein is involved in the repair of mismatches in DNA. It is possible that it carries out the mismatch recognition step. This protein has a weak ATPase activity. The protein is DNA mismatch repair protein MutS of Buchnera aphidicola subsp. Acyrthosiphon pisum (strain Tuc7).